Reading from the N-terminus, the 592-residue chain is Aspartate--tRNA ligase (592 aa).

Residue Glu171 coordinates L-aspartate. Positions 195–198 are aspartate; it reads QLFK. An L-aspartate-binding site is contributed by Arg217. ATP is bound by residues 217 to 219 and Gln226; that span reads RDE. His448 provides a ligand contact to L-aspartate. Residue Glu482 participates in ATP binding. Arg489 serves as a coordination point for L-aspartate. 534 to 537 serves as a coordination point for ATP; that stretch reads GLDR.

It belongs to the class-II aminoacyl-tRNA synthetase family. Type 1 subfamily. As to quaternary structure, homodimer.

It is found in the cytoplasm. The enzyme catalyses tRNA(Asp) + L-aspartate + ATP = L-aspartyl-tRNA(Asp) + AMP + diphosphate. Catalyzes the attachment of L-aspartate to tRNA(Asp) in a two-step reaction: L-aspartate is first activated by ATP to form Asp-AMP and then transferred to the acceptor end of tRNA(Asp). The polypeptide is Aspartate--tRNA ligase (Vibrio atlanticus (strain LGP32) (Vibrio splendidus (strain Mel32))).